The following is a 60-amino-acid chain: Short neurotoxin 1 (60 aa).

4 cysteine pairs are disulfide-bonded: cysteine 3-cysteine 22, cysteine 17-cysteine 39, cysteine 41-cysteine 52, and cysteine 53-cysteine 58.

Belongs to the three-finger toxin family. Short-chain subfamily. Type I alpha-neurotoxin sub-subfamily. In terms of tissue distribution, expressed by the venom gland.

The protein localises to the secreted. Binds to muscle nicotinic acetylcholine receptor (nAChR) and inhibit acetylcholine from binding to the receptor, thereby impairing neuromuscular transmission. In Dendroaspis viridis (Western green mamba), this protein is Short neurotoxin 1.